The sequence spans 141 residues: Lutropin subunit beta (141 aa).

An N-terminal signal peptide occupies residues 1 to 20; it reads MERLQGLLLWLLLSPSVVWA. Intrachain disulfides connect Cys-29/Cys-77, Cys-43/Cys-92, Cys-46/Cys-130, Cys-54/Cys-108, Cys-58/Cys-110, and Cys-113/Cys-120. Asn-33 carries an N-linked (GlcNAc...) asparagine glycan.

This sequence belongs to the glycoprotein hormones subunit beta family. In terms of assembly, heterodimer of a common alpha chain and a unique beta chain which confers biological specificity to thyrotropin, lutropin, follitropin and gonadotropin.

The protein resides in the secreted. Its function is as follows. Promotes spermatogenesis and ovulation by stimulating the testes and ovaries to synthesize steroids. The chain is Lutropin subunit beta (Lhb) from Rattus norvegicus (Rat).